A 339-amino-acid chain; its full sequence is UDP-3-O-acylglucosamine N-acyltransferase (339 aa).

The Proton acceptor role is filled by histidine 239.

The protein belongs to the transferase hexapeptide repeat family. LpxD subfamily. As to quaternary structure, homotrimer.

It catalyses the reaction a UDP-3-O-[(3R)-3-hydroxyacyl]-alpha-D-glucosamine + a (3R)-hydroxyacyl-[ACP] = a UDP-2-N,3-O-bis[(3R)-3-hydroxyacyl]-alpha-D-glucosamine + holo-[ACP] + H(+). The protein operates within bacterial outer membrane biogenesis; LPS lipid A biosynthesis. Functionally, catalyzes the N-acylation of UDP-3-O-acylglucosamine using 3-hydroxyacyl-ACP as the acyl donor. Is involved in the biosynthesis of lipid A, a phosphorylated glycolipid that anchors the lipopolysaccharide to the outer membrane of the cell. The polypeptide is UDP-3-O-acylglucosamine N-acyltransferase (Aliivibrio fischeri (strain ATCC 700601 / ES114) (Vibrio fischeri)).